A 901-amino-acid polypeptide reads, in one-letter code: Modifier of cell death (901 aa).

Disordered regions lie at residues 147–169 and 218–245; these read AQKR…PRAA and PRKS…SPSP. The C2H2-type zinc finger occupies 259 to 282; that stretch reads FKCAECGDGFPVMDRLCDHMIKQH. Disordered stretches follow at residues 494-528, 682-717, and 779-901; these read KKEH…DDVP, QERV…SHEE, and HKAI…WDDN. Positions 817–828 are enriched in low complexity; that stretch reads EAAAKLIQAENE. Positions 829-840 are enriched in acidic residues; the sequence is MVVEEEEVEEPP. A compositionally biased stretch (basic and acidic residues) spans 846 to 866; it reads QVPKEKEVEVAEAEKLPEQVK.

Functionally, promotes programmed cell death. Its role in programmed cell death may be in conjunction with cell cycle regulatory factor efl-1 and the synthetic multivulva class B proteins dpl-1 and lin-35, and is independent of the ced-1, ced-8 and ced-9 pathways. The polypeptide is Modifier of cell death (Caenorhabditis elegans).